A 66-amino-acid polypeptide reads, in one-letter code: KEGYPVDWGNCKYECMSDAYCKDLCVDRKAKSGYCYKLNWFCYCEGLPDDSPIKTNGHCRPGGRRK.

Residues 1–60 (KEGYPVDWGNCKYECMSDAYCKDLCVDRKAKSGYCYKLNWFCYCEGLPDDSPIKTNGHCR) enclose the LCN-type CS-alpha/beta domain. 4 disulfides stabilise this stretch: C11–C59, C15–C35, C21–C42, and C25–C44.

It belongs to the long (4 C-C) scorpion toxin superfamily. Sodium channel inhibitor family. Alpha subfamily. As to expression, expressed by the venom gland.

The protein resides in the secreted. Its function is as follows. Alpha toxins bind voltage-independently at site-3 of sodium channels (Nav) and inhibits the inactivation of the activated channels, thereby blocking neuronal transmission. This is Putative alpha-neurotoxin RjAa16 from Rhopalurus junceus (Caribbean blue scorpion).